The primary structure comprises 282 residues: MAWFKKSKAPIVPVESKKVKMPEGVWRKCPHCNEIIYAKEIERNLNVCPKCDYHFRISARERIALVLDEGSFVERDAGMKSVDFLEFKDGKRYRDRISAAIKKSGLNDAVIWGEGAIEAQPVVVAVFDFSFMGGSMGSVVGEKITRAVEKALENRCPCLVFSSSGGARMQESIMSLMQMAKTSAALSRLKEAGLPYISIMTDPTTGGVTASFAMLGDVNMAEPRALIGFAGPRVIEQTIRQKLPEGFQRSEYLLEHGMIDMIVRRPEMKARLSQMLRIFMKQ.

The 258-residue stretch at 25–282 folds into the CoA carboxyltransferase N-terminal domain; the sequence is VWRKCPHCNE…SQMLRIFMKQ (258 aa). Residues cysteine 29, cysteine 32, cysteine 48, and cysteine 51 each contribute to the Zn(2+) site. The C4-type zinc-finger motif lies at 29-51; the sequence is CPHCNEIIYAKEIERNLNVCPKC.

The protein belongs to the AccD/PCCB family. Acetyl-CoA carboxylase is a heterohexamer composed of biotin carboxyl carrier protein (AccB), biotin carboxylase (AccC) and two subunits each of ACCase subunit alpha (AccA) and ACCase subunit beta (AccD). The cofactor is Zn(2+).

Its subcellular location is the cytoplasm. It carries out the reaction N(6)-carboxybiotinyl-L-lysyl-[protein] + acetyl-CoA = N(6)-biotinyl-L-lysyl-[protein] + malonyl-CoA. Its pathway is lipid metabolism; malonyl-CoA biosynthesis; malonyl-CoA from acetyl-CoA: step 1/1. Component of the acetyl coenzyme A carboxylase (ACC) complex. Biotin carboxylase (BC) catalyzes the carboxylation of biotin on its carrier protein (BCCP) and then the CO(2) group is transferred by the transcarboxylase to acetyl-CoA to form malonyl-CoA. The polypeptide is Acetyl-coenzyme A carboxylase carboxyl transferase subunit beta (Syntrophotalea carbinolica (strain DSM 2380 / NBRC 103641 / GraBd1) (Pelobacter carbinolicus)).